Here is a 242-residue protein sequence, read N- to C-terminus: Probable transcriptional regulatory protein lhv_0777 (242 aa).

The tract at residues 1-22 (MSGHSKWHNIQGRKNAQDAKRG) is disordered.

The protein belongs to the TACO1 family.

It localises to the cytoplasm. The protein is Probable transcriptional regulatory protein lhv_0777 of Lactobacillus helveticus (strain DPC 4571).